The sequence spans 359 residues: MTFDAARYTAQLQDKVTRLRDLLAPFDAPEPQVFDSPLQNFRLRAEFRLWREGGERHYAMFSQDDKRTPILIEEFPIASQRINQLMPQLKAAWQASAALSHKLFQVEFLTTLAGDAMITLCYHRPLDEHWHTAANKLATDLNVSIIGRSKGKRDVIGHDYVVEKLEVGGRTFSYRQPEGAFTQPNGTVNQKMLNWAYDALGDRPDDLLELYCGNGNFTLPLATRVRKVLATEISKTSVNAALSNLDENAVGNVTLVRLSAEELTEALNEVRPFRRLHGIDLKRYEFSSVFVDPPRAGMDPDTCELTRRFDNILYISCNPETLAANIAQLHDTHRITKCAMFDQFPWTHHMESGVLLTRR.

Glutamine 183, tyrosine 211, asparagine 216, glutamate 232, and aspartate 292 together coordinate S-adenosyl-L-methionine. Residue cysteine 317 is the Nucleophile of the active site. Glutamate 351 serves as the catalytic Proton acceptor.

It belongs to the class I-like SAM-binding methyltransferase superfamily. RNA M5U methyltransferase family. TrmA subfamily.

It carries out the reaction uridine(54) in tRNA + S-adenosyl-L-methionine = 5-methyluridine(54) in tRNA + S-adenosyl-L-homocysteine + H(+). It catalyses the reaction uridine(341) in tmRNA + S-adenosyl-L-methionine = 5-methyluridine(341) in tmRNA + S-adenosyl-L-homocysteine + H(+). Dual-specificity methyltransferase that catalyzes the formation of 5-methyluridine at position 54 (m5U54) in all tRNAs, and that of position 341 (m5U341) in tmRNA (transfer-mRNA). The sequence is that of tRNA/tmRNA (uracil-C(5))-methyltransferase from Pseudomonas fluorescens (strain SBW25).